Consider the following 90-residue polypeptide: MAVTYEKTFEIEIINELSASVYNRVLNYVLNHELDTKNTRLLEVNLLNQLEVAQEVDLFQQPFEELQAIHEYWRSMNQYSKQILTKEKVA.

This sequence belongs to the epsilon antitoxin family. In terms of assembly, in the presence of the zeta toxin, forms an inactive PezA(2)PezT(2) heterotetramer.

Antitoxin component of a type II toxin-antitoxin (TA) system. Neutralizes the toxic effect of zeta toxin. Part of a postsegregational killing (PSK) system involved in the killing of plasmid-free cells. Continuous synthesis of the epsilon antitoxin is required to counteract the zeta toxin. This is Antitoxin epsilon 2 from Enterococcus faecalis (Streptococcus faecalis).